A 192-amino-acid polypeptide reads, in one-letter code: MVTPRPAPARSPALLLLLLLATARGQEQDQTTDWRATLKTIRNGIHKIDTYLNAALDLLGGEDGLCQYKCSDGSKPVPRYGYKPSPPNGCGSPLFGVHLNIGIPSLTKCCNQHDRCYETCGKSKNDCDEEFQYCLSKICRDVQKTLGLSQNVQACETTVELLFDSVIHLGCKPYLDSQRAACWCRYEEKTDL.

Residues 1 to 25 (MVTPRPAPARSPALLLLLLLATARG) form the signal peptide. Positions 91, 93, and 95 each coordinate Ca(2+). The active site involves histidine 113. Aspartate 114 contributes to the Ca(2+) binding site. Residue aspartate 128 is part of the active site.

Belongs to the phospholipase A2 family. Requires Ca(2+) as cofactor.

Its subcellular location is the secreted. It is found in the cytoplasm. It catalyses the reaction a 1,2-diacyl-sn-glycero-3-phosphocholine + H2O = a 1-acyl-sn-glycero-3-phosphocholine + a fatty acid + H(+). Its function is as follows. PA2 catalyzes the calcium-dependent hydrolysis of the 2-acyl groups in 3-sn-phosphoglycerides. Does not exhibit detectable activity toward sn-2-arachidonoyl- or linoleoyl-phosphatidylcholine or -phosphatidylethanolamine. This is Group XIIA secretory phospholipase A2 (Pla2g12a) from Mus musculus (Mouse).